The following is a 370-amino-acid chain: Histidinol-phosphate aminotransferase (370 aa).

N6-(pyridoxal phosphate)lysine is present on K231.

Belongs to the class-II pyridoxal-phosphate-dependent aminotransferase family. Histidinol-phosphate aminotransferase subfamily. Homodimer. Requires pyridoxal 5'-phosphate as cofactor.

It carries out the reaction L-histidinol phosphate + 2-oxoglutarate = 3-(imidazol-4-yl)-2-oxopropyl phosphate + L-glutamate. The protein operates within amino-acid biosynthesis; L-histidine biosynthesis; L-histidine from 5-phospho-alpha-D-ribose 1-diphosphate: step 7/9. This is Histidinol-phosphate aminotransferase from Paracidovorax citrulli (strain AAC00-1) (Acidovorax citrulli).